Here is a 314-residue protein sequence, read N- to C-terminus: Ficolin-2 (314 aa).

A signal peptide spans 1-17 (MALGSAALFVLTLTVHA). The region spanning 40–96 (GCPGLPGAAGPKGEAGAKGDRGESGLPGIPGKEGPTGPKGNQGEKGIRGEKGDSGPS) is the Collagen-like domain. Residues 49–101 (GPKGEAGAKGDRGESGLPGIPGKEGPTGPKGNQGEKGIRGEKGDSGPSQSCAT) form a disordered region. A Fibrinogen C-terminal domain is found at 97–314 (QSCATGPRTC…KVSEMKVRLI (218 aa)). Cystine bridges form between cysteine 99–cysteine 127 and cysteine 106–cysteine 134. Ca(2+) contacts are provided by aspartate 250, aspartate 252, serine 254, and serine 256. A disulfide bond links cysteine 258 and cysteine 271. Asparagine 301 carries N-linked (GlcNAc...) asparagine glycosylation.

This sequence belongs to the ficolin lectin family. Homotrimer. Interacts with elastin. Interacts with MASP1 and MASP2.

The protein localises to the secreted. Its function is as follows. May function in innate immunity through activation of the lectin complement pathway. Calcium-dependent and GlcNAc-binding lectin. The polypeptide is Ficolin-2 (Fcn2) (Mus musculus (Mouse)).